A 435-amino-acid chain; its full sequence is MTQARCPALLIAAPASGQGKTTVTAALARLHARQGRRVRVFKCGPDFLDPMILARASGAPVYQLDLWMVGEAEARRLLARAAGEADLILIEGVMGLFDGNPSAADLARRFGVPVLGVINGAAMAQTFGALAYGLAHFQPDLPFSGVLGNRVGSQRHSDILRDCLPPGMRWFGGLPRSAEFELPSRHLGLVQAEELADLDARLDAAADALRASAETDLPEPVTFEVPAPAPLQRSLEGVRIGVARDASFAFLYQANLDLLRELGAELAFFSPLQDQALPAVDSLYLPGGYPELHLGRLQGNRAMAEAIRAHHAAGKPLLAECGGMLYLLDCLEDADGERGELLGLLPGRARLQKRLTALALQEVELPEGRLRGHTFHHSTLDCAVEPLARGVCPNGRNTAEAVFRLGRLTASYIHFYLPSNPQAAAALLAPARDAD.

In terms of domain architecture, GATase cobBQ-type spans 239 to 422; the sequence is RIGVARDASF…IHFYLPSNPQ (184 aa). The Nucleophile role is filled by cysteine 321.

The protein belongs to the CobB/CbiA family. The cofactor is Mg(2+).

The catalysed reaction is hydrogenobyrinate + 2 L-glutamine + 2 ATP + 2 H2O = hydrogenobyrinate a,c-diamide + 2 L-glutamate + 2 ADP + 2 phosphate + 2 H(+). It functions in the pathway cofactor biosynthesis; adenosylcobalamin biosynthesis; cob(II)yrinate a,c-diamide from precorrin-2 (aerobic route): step 9/10. Catalyzes the ATP-dependent amidation of the two carboxylate groups at positions a and c of hydrogenobyrinate, using either L-glutamine or ammonia as the nitrogen source. The sequence is that of Hydrogenobyrinate a,c-diamide synthase from Pseudomonas aeruginosa (strain ATCC 15692 / DSM 22644 / CIP 104116 / JCM 14847 / LMG 12228 / 1C / PRS 101 / PAO1).